The sequence spans 40 residues: Potassium channel toxin alpha-KTx 12.2 (40 aa).

4 disulfides stabilise this stretch: Cys2/Cys5, Cys10/Cys31, Cys16/Cys36, and Cys20/Cys38.

It belongs to the short scorpion toxin superfamily. Potassium channel inhibitor family. Alpha-KTx 12 subfamily. As to expression, expressed by the venom gland.

It localises to the secreted. Inhibits high conductance calcium-activated potassium channels. Reversibly inhibits Shaker B potassium channels. In Tityus trivittatus (Argentinean scorpion), this protein is Potassium channel toxin alpha-KTx 12.2.